The primary structure comprises 293 residues: Ribosomal protein L11 methyltransferase (293 aa).

4 residues coordinate S-adenosyl-L-methionine: threonine 145, glycine 166, aspartate 188, and asparagine 230.

This sequence belongs to the methyltransferase superfamily. PrmA family.

Its subcellular location is the cytoplasm. It carries out the reaction L-lysyl-[protein] + 3 S-adenosyl-L-methionine = N(6),N(6),N(6)-trimethyl-L-lysyl-[protein] + 3 S-adenosyl-L-homocysteine + 3 H(+). Functionally, methylates ribosomal protein L11. The polypeptide is Ribosomal protein L11 methyltransferase (Salmonella arizonae (strain ATCC BAA-731 / CDC346-86 / RSK2980)).